The sequence spans 223 residues: Imidazoleglycerol-phosphate dehydratase (223 aa).

The protein belongs to the imidazoleglycerol-phosphate dehydratase family.

The catalysed reaction is D-erythro-1-(imidazol-4-yl)glycerol 3-phosphate = 3-(imidazol-4-yl)-2-oxopropyl phosphate + H2O. The protein operates within amino-acid biosynthesis; L-histidine biosynthesis; L-histidine from 5-phospho-alpha-D-ribose 1-diphosphate: step 6/9. The protein is Imidazoleglycerol-phosphate dehydratase (HIS3) of Zygosaccharomyces bailii.